We begin with the raw amino-acid sequence, 1512 residues long: Bifunctional glutamate/proline--tRNA ligase (1512 aa).

The interval 164 to 759 is glutamate--tRNA ligase; it reads GTKWDVSGNR…SSVLYSRVAV (596 aa). The 'HIGH' region motif lies at 204–214; that stretch reads PEASGYLHIGH. A disordered region spans residues 294 to 315; sequence TPAEQMKAEREQRTESKHRKNS. Basic and acidic residues predominate over residues 299–308; the sequence is MKAEREQRTE. K300 bears the N6-acetyllysine; alternate mark. Residue K300 is modified to N6-malonyllysine; alternate. Residue T355 is modified to Phosphothreonine. K417 is subject to N6-acetyllysine. Residues 432-436 carry the 'KMSKS' region motif; the sequence is VLSKR. Residue S434 is modified to Phosphoserine. N6-acetyllysine is present on residues K498, K535, K542, and K637. The segment covering 709–736 has biased composition (basic and acidic residues); it reads EMPTSGSKEKTKVEISKKETSSAPKERP. Positions 709–742 are disordered; the sequence is EMPTSGSKEKTKVEISKKETSSAPKERPAPAVSS. Residues 749 to 805 enclose the WHEP-TRS 1 domain; that stretch reads DSSVLYSRVAVQGDVVRELKAKKAPKEDIDAAVKQLLTLKAEYKEKTGQEYKPGNPS. Residues 760 to 956 form a 3 X 57 AA approximate repeats region; the sequence is QGDVVRELKA…GIEYKPVSAT (197 aa). At K788 the chain carries N6-acetyllysine. The interval 795–819 is disordered; the sequence is TGQEYKPGNPSAAAVQTVSTKSSSN. Residues 808-819 are compositionally biased toward polar residues; the sequence is AVQTVSTKSSSN. One can recognise a WHEP-TRS 2 domain in the interval 822–878; it reads ESTSLYNKVAAQGEVVRKLKAEKAPKAKVTEAVECLLSLKAEYKEKTGKDYVPGQPP. An N6-acetyllysine modification is found at K861. Disordered stretches follow at residues 869 to 898 and 956 to 1011; these read GKDYVPGQPPASQNSHSNPVSNAQPAGAEK and TGAE…PKKQ. Y872 is subject to Phosphotyrosine. Residues 878 to 892 show a composition bias toward polar residues; the sequence is PASQNSHSNPVSNAQ. A Phosphoserine modification is found at S885. The WHEP-TRS 3 domain maps to 900-956; sequence EAKVLFDRVACQGEVVRKLKAEKASKDQVDSAVQELLQLKAQYKSLTGIEYKPVSAT. Positions 958 to 976 are enriched in basic and acidic residues; that stretch reads AEDKDKKKKEKENKSEKQN. Residues 997-1006 show a composition bias toward gly residues; sequence LSSGGAGEGQ. S998 carries the phosphoserine modification. At S999 the chain carries Phosphoserine; by RPS6KB1. The tract at residues 1007–1512 is proline--tRNA ligase; sequence GPKKQTRLGL…KFYTLFGRSY (506 aa). L-proline is bound by residues 1121 to 1123 and R1152; that span reads TSE. ATP contacts are provided by R1152, E1154, R1163, T1164, Q1237, and T1240. Residue R1152 is modified to Omega-N-methylarginine. Q1237 serves as a coordination point for Mg(2+). An L-proline-binding site is contributed by H1242. Residues T1276 and R1278 each contribute to the ATP site. Phosphoserine is present on S1350. Zn(2+) contacts are provided by C1448, C1453, C1495, and C1497. An N6-acetyllysine modification is found at K1503.

This sequence in the N-terminal section; belongs to the class-I aminoacyl-tRNA synthetase family. Glutamate--tRNA ligase type 2 subfamily. In the C-terminal section; belongs to the class-II aminoacyl-tRNA synthetase family. Homodimer. Part of the aminoacyl-tRNA synthetase multienzyme complex, also know as multisynthetase complex, that is composed of the tRNA ligases for Arg (RARS1), Asp (DARS1), Gln (QARS1), Ile (IARS1), Leu (LARS1), Lys (KARS1), Met (MARS1) the bifunctional ligase for Glu and Pro (EPRS1) and the auxiliary subunits AIMP1/p43, AIMP2/p38 and EEF1E1/p18. Forms a linear complex that contains MARS1, EEF1E1, EPRS1 and AIMP2 that is at the core of the multisubunit complex. Interacts with TARS3. Interacts with DUS2L. Component of the GAIT complex which is composed of EPRS1, RPL13A and GAPDH. Interacts (phosphorylated at Ser-999) with SLC27A1; mediates the translocation of SLC27A1 from the cytoplasm to the plasma membrane thereby increasing the uptake of long-chain fatty acids. In terms of processing, phosphorylated at Ser-999 by RPS6KB1; triggers EPRS1 release from the aminoacyl-tRNA synthetase multienzyme complex. In monocytes, the IFN-gamma-induced phosphorylation at Ser-999 releases EPRS1 from the aminoacyl-tRNA synthetase multienzyme complex, allowing its association with the GAIT complex. Phosphorylation at Ser-999 is specifically required for the RPL13A-mediated interaction of the GAIT complex with eIF4G. Phosphorylation at Ser-999 by RPS6KB1, is also induced by insulin through activation of the mTORC1 signaling pathway and promotes the interaction of EPRS1 with SLC27A1.

It localises to the cytoplasm. The protein localises to the cytosol. It is found in the membrane. It catalyses the reaction tRNA(Glu) + L-glutamate + ATP = L-glutamyl-tRNA(Glu) + AMP + diphosphate. It carries out the reaction tRNA(Pro) + L-proline + ATP = L-prolyl-tRNA(Pro) + AMP + diphosphate. Its function is as follows. Multifunctional protein which primarily functions within the aminoacyl-tRNA synthetase multienzyme complex, also known as multisynthetase complex. Within the complex it catalyzes the attachment of both L-glutamate and L-proline to their cognate tRNAs in a two-step reaction where the amino acid is first activated by ATP to form a covalent intermediate with AMP. Subsequently, the activated amino acid is transferred to the acceptor end of the cognate tRNA to form L-glutamyl-tRNA(Glu) and L-prolyl-tRNA(Pro). Upon interferon-gamma stimulation, EPRS1 undergoes phosphorylation, causing its dissociation from the aminoacyl-tRNA synthetase multienzyme complex. It is recruited to form the GAIT complex, which binds to stem loop-containing GAIT elements found in the 3'-UTR of various inflammatory mRNAs, such as ceruloplasmin. The GAIT complex inhibits the translation of these mRNAs, allowing interferon-gamma to redirect the function of EPRS1 from protein synthesis to translation inhibition in specific cell contexts. Furthermore, it can function as a downstream effector in the mTORC1 signaling pathway, by promoting the translocation of SLC27A1 from the cytoplasm to the plasma membrane where it mediates the uptake of long-chain fatty acid by adipocytes. Thereby, EPRS1 also plays a role in fat metabolism and more indirectly influences lifespan. The chain is Bifunctional glutamate/proline--tRNA ligase from Mus musculus (Mouse).